Here is a 293-residue protein sequence, read N- to C-terminus: MNSGFFLSPPNYDSPAELKSLLETLGFAMQKKFGQNFLIDKKTRENLISFLTLDKGTRVWEVGPGLGAMTYLLLEKGVHLTAFEIDKGFISLLKKIFLENSKQNFTLIEGDVQKNWLPYLIEHGKPNVFFGNLPYNIASDLIASTVEAGVVFDTMLFTVQKEAAERITARPGNKNYTAFSVLCSLFYECKIVKTIPASAFWPQPNVESAAVLFKAKKEFAEYKNFKLFIKIVKALFSSRRKNIKNNLGSWMKSNGYGDKIDLVLERSGLSGNLRAESLALYDFLLLSDIIGHL.

Asn36, Leu38, Gly63, Glu84, Asp111, and Asn132 together coordinate S-adenosyl-L-methionine.

The protein belongs to the class I-like SAM-binding methyltransferase superfamily. rRNA adenine N(6)-methyltransferase family. RsmA subfamily.

The protein resides in the cytoplasm. It catalyses the reaction adenosine(1518)/adenosine(1519) in 16S rRNA + 4 S-adenosyl-L-methionine = N(6)-dimethyladenosine(1518)/N(6)-dimethyladenosine(1519) in 16S rRNA + 4 S-adenosyl-L-homocysteine + 4 H(+). Its function is as follows. Specifically dimethylates two adjacent adenosines (A1518 and A1519) in the loop of a conserved hairpin near the 3'-end of 16S rRNA in the 30S particle. May play a critical role in biogenesis of 30S subunits. This Treponema denticola (strain ATCC 35405 / DSM 14222 / CIP 103919 / JCM 8153 / KCTC 15104) protein is Ribosomal RNA small subunit methyltransferase A.